A 439-amino-acid chain; its full sequence is MVIDITKKYPELKEIYELTVNHTIWRKKECINLIASENVMSPLAMLLYLNDMMHRYAEGKPFKRFYQGLKFVDELEVKAQRIIGELLETDYVELRPISGTIANATVFKAFAEHGDKAVVVPVQAGAHVSHTRYGTLGGLGIEQVEMPFNIEEWNIDVDGAKKVIEKVKPKIVILGGSLYIFPHPVKEIAEAAHSVGAKLMYDVAHVLGLITGKVWENPLKQGADILTSSTHKTFPGPQGGLIATVTKDDYKKVSKIVFPVFVSNHHLHRLAALAVTGLEMKYFGRQYAEQIVKNAKAFAEALAENGFKVIGENKGYTESHQVIIDVREHGGGAKNAKLLEEANIIVNKNMLPWDKPEDIKNPSGIRLGVQEVTRWGMKEEDMKTIAEFMRLVVIDKRDPKEIRNKVIEFRKNFLEIHYGFKISGEEETKLLKIMLHGEV.

126–128 (AHV) provides a ligand contact to (6S)-5,6,7,8-tetrahydrofolate. Lys-232 is modified (N6-(pyridoxal phosphate)lysine).

This sequence belongs to the SHMT family. Homodimer. Requires pyridoxal 5'-phosphate as cofactor.

The protein localises to the cytoplasm. It functions in the pathway amino-acid biosynthesis; glycine biosynthesis; glycine from L-serine: step 1/1. In terms of biological role, catalyzes the reversible interconversion of serine and glycine with a modified folate serving as the one-carbon carrier. Also exhibits a pteridine-independent aldolase activity toward beta-hydroxyamino acids, producing glycine and aldehydes, via a retro-aldol mechanism. The polypeptide is Serine hydroxymethyltransferase (Staphylothermus marinus (strain ATCC 43588 / DSM 3639 / JCM 9404 / F1)).